We begin with the raw amino-acid sequence, 85 residues long: Large ribosomal subunit protein bL27 (85 aa).

The interval 1–20 is disordered; sequence MAHKKAGGSTRNGRDSESKR.

It belongs to the bacterial ribosomal protein bL27 family.

This is Large ribosomal subunit protein bL27 from Yersinia enterocolitica serotype O:8 / biotype 1B (strain NCTC 13174 / 8081).